Here is a 29-residue protein sequence, read N- to C-terminus: Cytochrome b6-f complex subunit 8 (29 aa).

The chain crosses the membrane as a helical span at residues 3–23 (IDVLGWVALLVVFTWSIAMVV).

Belongs to the PetN family. In terms of assembly, the 4 large subunits of the cytochrome b6-f complex are cytochrome b6, subunit IV (17 kDa polypeptide, PetD), cytochrome f and the Rieske protein, while the 4 small subunits are PetG, PetL, PetM and PetN. The complex functions as a dimer.

The protein resides in the cellular thylakoid membrane. In terms of biological role, component of the cytochrome b6-f complex, which mediates electron transfer between photosystem II (PSII) and photosystem I (PSI), cyclic electron flow around PSI, and state transitions. The sequence is that of Cytochrome b6-f complex subunit 8 from Mastigocladus laminosus (Fischerella sp.).